The sequence spans 219 residues: MKAINIALDGPAAAGKSTIAKRVASELSMIYVDTGAMYRALTYKYLKLNKTEDFAKLVDQTTLDLTYKADKGQCVILDNEDVTDFLRNNDVTQHVSYVASKEPVRSFAVKKQKELAAEKGIVMDGRDIGTVVLPDADLKVYMIASVEERAERRYKDNQLRGIESNFEDLKRDIEARDQYDMNREISPLRKADDAVTLDTTGKSIEEVTDEILAMVSQIK.

Position 10-18 (10-18 (GPAAAGKST)) interacts with ATP.

The protein belongs to the cytidylate kinase family. Type 1 subfamily.

It is found in the cytoplasm. It carries out the reaction CMP + ATP = CDP + ADP. The catalysed reaction is dCMP + ATP = dCDP + ADP. The chain is Cytidylate kinase from Staphylococcus aureus (strain JH9).